The following is a 236-amino-acid chain: 2-phospho-L-lactate guanylyltransferase (236 aa).

This sequence belongs to the CofC family. In terms of assembly, homodimer.

The enzyme catalyses (2S)-2-phospholactate + GTP + H(+) = (2S)-lactyl-2-diphospho-5'-guanosine + diphosphate. The protein operates within cofactor biosynthesis; coenzyme F420 biosynthesis. In terms of biological role, guanylyltransferase that catalyzes the activation of (2S)-2-phospholactate (2-PL) as (2S)-lactyl-2-diphospho-5'-guanosine, via the condensation of 2-PL with GTP. It is involved in the biosynthesis of coenzyme F420, a hydride carrier cofactor. In Natrialba magadii (strain ATCC 43099 / DSM 3394 / CCM 3739 / CIP 104546 / IAM 13178 / JCM 8861 / NBRC 102185 / NCIMB 2190 / MS3) (Natronobacterium magadii), this protein is 2-phospho-L-lactate guanylyltransferase.